Reading from the N-terminus, the 673-residue chain is MEEPRRLGGRYELGPVLGRGGMAEVYHAHDTRLGRQVAVKTLRADLARDPSFQARFRREAQSAASLNHPAIVAVYDTGEDYIDNVSIPYIVMEYVDGSTLRELLHSGRKLLPERTLEMTIGILQALEYSHRAGIVHRDIKPANVMLTRNGQVKVMDFGIARAMGDSGMTMTQTAAVIGTAQYLSPEQAKGEQVDARSDLYSTGCLLYELLTVRPPFVGDSPVAVAYQHVREEPQAPSVFDPEITPEMDAIVLKALVKDPDYRYQSADEMRVDIEACLDGQPVGATAAMGAMAAGGYGAYPDDQPTTALRSDGGGGATTMLPPMNPDDGGYGYDERPDRRRQQPRKKNTSTIFLVLAGVLVLVGAILIGKYAFSGDGGPGNDKVPVPAFIGLSKADAQQQADNIDLVLTFKQQECEDQPKGNICAQDPKQGTDVDKESTVNLVVSTGAPKVAVPNVIDKNIDEAKKQLEDKGFEVETKQTESSQDEGTILSQNPDPGKELEKGSTVTLEVAKAEEKATVPDVVGRTCDEAKAQVESGGDLTAVCTDQPTNDPNQVGKVISTTPQSSTQVDPGSKVTIVVGKAVEKTKVPEVRGKTLAEARQILQQSGFTNVQVAQGSPGDDNAKVFASNPQPGSEVDDPAATPITLMTVPGDGGNGNGGNGNGGAIAGLPGFGD.

The Protein kinase domain occupies 11-277; it reads YELGPVLGRG…EMRVDIEACL (267 aa). ATP-binding positions include 17-25 and Lys-40; that span reads LGRGGMAEV. Asp-138 acts as the Proton acceptor in catalysis. The interval 302–345 is disordered; that stretch reads DQPTTALRSDGGGGATTMLPPMNPDDGGYGYDERPDRRRQQPRK. PASTA domains lie at 379 to 445, 446 to 511, 512 to 580, and 581 to 649; these read GNDK…VVST, GAPK…EVAK, AEEK…VVGK, and AVEK…MTVP. Residues 472-500 form a disordered region; the sequence is FEVETKQTESSQDEGTILSQNPDPGKELE. The span at 479-493 shows a compositional bias: polar residues; that stretch reads TESSQDEGTILSQNP. 2 disordered regions span residues 613–641 and 653–673; these read AQGS…PAAT and GNGN…GFGD.

This sequence belongs to the protein kinase superfamily. Ser/Thr protein kinase family.

The enzyme catalyses L-seryl-[protein] + ATP = O-phospho-L-seryl-[protein] + ADP + H(+). It catalyses the reaction L-threonyl-[protein] + ATP = O-phospho-L-threonyl-[protein] + ADP + H(+). This Streptomyces coelicolor (strain ATCC BAA-471 / A3(2) / M145) protein is Probable serine/threonine-protein kinase SCO3848.